The chain runs to 2382 residues: Nonribosomal peptide synthetase chyA (2382 aa).

The adenylation 1 stretch occupies residues 204–607 (QKCATQPESI…LGRKDHQVKI (404 aa)). The Carrier 1 domain maps to 745 to 821 (TPTTQNQRIL…DMASVLVKDH (77 aa)). O-(pantetheine 4'-phosphoryl)serine is present on serine 782. A condensation 1 region spans residues 857 to 1269 (EDVYPCTHMQ…LVPPEDMATL (413 aa)). The segment at 1294–1687 (GQPDTLAIHS…VGRKDDQVKL (394 aa)) is adenylation 2. A Carrier 2 domain is found at 1833–1909 (VPVSIHGRKV…GLSLKCATEN (77 aa)). Serine 1870 carries the O-(pantetheine 4'-phosphoryl)serine modification. Positions 1967–2373 (MTLHNFYSRY…FSDVIESLAS (407 aa)) are condensation 2.

The protein belongs to the NRP synthetase family.

It participates in pigment biosynthesis. In terms of biological role, nonribosomal peptide synthetase; part of the gene cluster that mediates the biosynthesis of the yellow pigment chrysogine. the NRPS chyA mediates the condensation of anthranilic acid and alanine into the intermediate 2-(2-aminopropanamido)benzoic acid. The remainder of the pathway is highly branched yielding at least 13 chrysogine-related compounds. The malonyl transferase chyE converts 2-(2-aminopropanamido)benzoic acid and 2-(2-aminopropanamido)benzamidine into 2-(2-(2-carboxyacetamido)propanamido)benzoic acid and 3-((1-((2-carbamoylphenyl)amino)-1-oxopropan-2-yl)amino)-3-oxopropanoic acid, respectively. ChyD is an amidase, being responsible for the amidation of the carboxylic acid moiety of 2-(2-aminopropanamido)benzoic acid, 2-(2-(2-carboxyacetamido)propanamido)benzoic acid and 2-(2-((4-amino-1-carboxy-4-oxobutyl)amino)propanamido)benzoic acid. ChyC is involved in the same reactions as ChyD, but plays a more minor role in the amidation reactions compared to chyD. The oxidoreductases chyH and chyM are involved in oxidation reactions that form N-pyruvoylanthranilamide from 2-(2-aminopropanamido)benzamidine and (1-((2-carbamoylphenyl)amino)-1-oxopropan-2-yl)glutamine, respectively. N-pyruvoylanthranilamide is further converted via two further branches in the pathway, yielding chrysogine and additional chrysogine-related coumpounds. Chrysogine is likely formed by a spontaneous ring closure from N-pyruvoylanthranilamide. This Penicillium rubens (strain ATCC 28089 / DSM 1075 / NRRL 1951 / Wisconsin 54-1255) (Penicillium chrysogenum) protein is Nonribosomal peptide synthetase chyA.